The chain runs to 368 residues: 2-aminoethylphosphonate--pyruvate transaminase (368 aa).

Lys-192 is subject to N6-(pyridoxal phosphate)lysine.

The protein belongs to the class-V pyridoxal-phosphate-dependent aminotransferase family. PhnW subfamily. Homodimer. Pyridoxal 5'-phosphate is required as a cofactor.

It carries out the reaction (2-aminoethyl)phosphonate + pyruvate = phosphonoacetaldehyde + L-alanine. Its function is as follows. Involved in phosphonate degradation. In Pseudomonas putida (strain ATCC 700007 / DSM 6899 / JCM 31910 / BCRC 17059 / LMG 24140 / F1), this protein is 2-aminoethylphosphonate--pyruvate transaminase.